The primary structure comprises 289 residues: Elongation factor Ts (289 aa).

The tract at residues threonine 82–valine 85 is involved in Mg(2+) ion dislocation from EF-Tu.

The protein belongs to the EF-Ts family.

The protein localises to the cytoplasm. Functionally, associates with the EF-Tu.GDP complex and induces the exchange of GDP to GTP. It remains bound to the aminoacyl-tRNA.EF-Tu.GTP complex up to the GTP hydrolysis stage on the ribosome. The chain is Elongation factor Ts from Marinobacter nauticus (strain ATCC 700491 / DSM 11845 / VT8) (Marinobacter aquaeolei).